Consider the following 181-residue polypeptide: MTVLTIYREDLPEQPLTQATDGAAEIAALLAQQGLRFERWPAQVELADDATPEQILAAYATEVDRVKTEGGYITVDAVSLRPDHPDRAALRQKFLAEHIHSEDEVRFFVAGQGLFSLHLGDHVYALLCTQNDWISVPAGTRHWFDMGSQPYFTALRFFNNPEGWVAQFTGSDIASQFPLLP.

The Fe(2+) site is built by His-98, His-100, Glu-104, and His-142. The Ni(2+) site is built by His-98, His-100, Glu-104, and His-142.

Belongs to the acireductone dioxygenase (ARD) family. As to quaternary structure, monomer. Requires Fe(2+) as cofactor. The cofactor is Ni(2+).

It carries out the reaction 1,2-dihydroxy-5-(methylsulfanyl)pent-1-en-3-one + O2 = 3-(methylsulfanyl)propanoate + CO + formate + 2 H(+). The catalysed reaction is 1,2-dihydroxy-5-(methylsulfanyl)pent-1-en-3-one + O2 = 4-methylsulfanyl-2-oxobutanoate + formate + 2 H(+). It functions in the pathway amino-acid biosynthesis; L-methionine biosynthesis via salvage pathway; L-methionine from S-methyl-5-thio-alpha-D-ribose 1-phosphate: step 5/6. In terms of biological role, catalyzes 2 different reactions between oxygen and the acireductone 1,2-dihydroxy-3-keto-5-methylthiopentene (DHK-MTPene) depending upon the metal bound in the active site. Fe-containing acireductone dioxygenase (Fe-ARD) produces formate and 2-keto-4-methylthiobutyrate (KMTB), the alpha-ketoacid precursor of methionine in the methionine recycle pathway. Ni-containing acireductone dioxygenase (Ni-ARD) produces methylthiopropionate, carbon monoxide and formate, and does not lie on the methionine recycle pathway. This chain is Acireductone dioxygenase, found in Synechococcus sp. (strain ATCC 27144 / PCC 6301 / SAUG 1402/1) (Anacystis nidulans).